Consider the following 544-residue polypeptide: CTP synthase (544 aa).

The interval 1 to 265 (MTQYIFITGG…DDLVVKHFGL (265 aa)) is amidoligase domain. Ser-13 provides a ligand contact to CTP. Ser-13 serves as a coordination point for UTP. Residues 14–19 (SLGKGI) and Asp-71 contribute to the ATP site. 2 residues coordinate Mg(2+): Asp-71 and Glu-139. CTP-binding positions include 146-148 (DIE), 186-191 (KTKPTQ), and Lys-222. Residues 186–191 (KTKPTQ) and Lys-222 each bind UTP. Residues 290–541 (TVAMVGKYVN…IAAALDYQTE (252 aa)) form the Glutamine amidotransferase type-1 domain. Residue Gly-351 coordinates L-glutamine. Residue Cys-378 is the Nucleophile; for glutamine hydrolysis of the active site. L-glutamine-binding positions include 379 to 382 (LGLQ), Glu-402, and Arg-469. Active-site residues include His-514 and Glu-516.

The protein belongs to the CTP synthase family. As to quaternary structure, homotetramer.

It catalyses the reaction UTP + L-glutamine + ATP + H2O = CTP + L-glutamate + ADP + phosphate + 2 H(+). The enzyme catalyses L-glutamine + H2O = L-glutamate + NH4(+). It carries out the reaction UTP + NH4(+) + ATP = CTP + ADP + phosphate + 2 H(+). The protein operates within pyrimidine metabolism; CTP biosynthesis via de novo pathway; CTP from UDP: step 2/2. With respect to regulation, allosterically activated by GTP, when glutamine is the substrate; GTP has no effect on the reaction when ammonia is the substrate. The allosteric effector GTP functions by stabilizing the protein conformation that binds the tetrahedral intermediate(s) formed during glutamine hydrolysis. Inhibited by the product CTP, via allosteric rather than competitive inhibition. Catalyzes the ATP-dependent amination of UTP to CTP with either L-glutamine or ammonia as the source of nitrogen. Regulates intracellular CTP levels through interactions with the four ribonucleotide triphosphates. In Dichelobacter nodosus (strain VCS1703A), this protein is CTP synthase.